Here is a 224-residue protein sequence, read N- to C-terminus: Urease accessory protein UreF (224 aa).

It belongs to the UreF family. UreD, UreF and UreG form a complex that acts as a GTP-hydrolysis-dependent molecular chaperone, activating the urease apoprotein by helping to assemble the nickel containing metallocenter of UreC. The UreE protein probably delivers the nickel.

The protein resides in the cytoplasm. Its function is as follows. Required for maturation of urease via the functional incorporation of the urease nickel metallocenter. This is Urease accessory protein UreF from Pseudomonas fluorescens (strain ATCC BAA-477 / NRRL B-23932 / Pf-5).